The sequence spans 405 residues: Terminal uridylyltransferase cid1 (405 aa).

Position 90 (S90) interacts with UTP. Residues D101 and D103 each coordinate Mg(2+). The UTP site is built by A168, N171, T172, K193, K197, S211, Y212, and H336. Positions 267 to 336 (SLGSLLHGFF…AIEDPFEISH (70 aa)) constitute a PAP-associated domain. An ATP-binding site is contributed by R340. The interval 377–405 (APIPPRRQKKTDEQSNKKLLNETDGDNSE) is disordered. The span at 386-397 (KTDEQSNKKLLN) shows a compositional bias: basic and acidic residues.

It belongs to the DNA polymerase type-B-like family. Mg(2+) is required as a cofactor. Requires Mn(2+) as cofactor.

The protein resides in the cytoplasm. It carries out the reaction RNA(n) + UTP = RNA(n)-3'-uridine ribonucleotide + diphosphate. The catalysed reaction is RNA(n) + ATP = RNA(n)-3'-adenine ribonucleotide + diphosphate. Functionally, cytoplasmic uridylyltransferase that mediates the terminal uridylation of mRNAs with short poly(A) tails such as such as act1, hcn1 and urg1 mRNAs, hence facilitating global mRNA decay. Uridylates the 3' ends of actin mRNAs upon S-phase arrest. Also has a weak poly(A) polymerase (PAP) activity. Residue His-336 is responsible for the specificity for UTP. Involved in cell cycle arrest where in association with crb2/rhp9 and chk1 it inhibits unscheduled mitosis. The chain is Terminal uridylyltransferase cid1 from Schizosaccharomyces pombe (strain 972 / ATCC 24843) (Fission yeast).